Here is a 207-residue protein sequence, read N- to C-terminus: MVQRSKSSANWLREHFNDPFVKQAQKDGYRSRASYKLLEIQEKDRLIRPGMSVIDLGAAPGGWSQVTSRLIGGQGRLIASDILEMDSIADVTFIQGDFTHDEVLQRILEAVGDSHVDLVISDMAPNMSGTPAVDIPRAMFLCELALDLATRVLKPGGDFLIKIFQGEGFDVYLKDVRSKFDKVQMRKPSSSRDRSREQYLLGRGFKG.

5 residues coordinate S-adenosyl-L-methionine: Gly61, Trp63, Asp81, Asp97, and Asp122. The active-site Proton acceptor is the Lys162.

Belongs to the class I-like SAM-binding methyltransferase superfamily. RNA methyltransferase RlmE family.

It localises to the cytoplasm. It carries out the reaction uridine(2552) in 23S rRNA + S-adenosyl-L-methionine = 2'-O-methyluridine(2552) in 23S rRNA + S-adenosyl-L-homocysteine + H(+). Specifically methylates the uridine in position 2552 of 23S rRNA at the 2'-O position of the ribose in the fully assembled 50S ribosomal subunit. The polypeptide is Ribosomal RNA large subunit methyltransferase E (Pseudomonas putida (strain ATCC 700007 / DSM 6899 / JCM 31910 / BCRC 17059 / LMG 24140 / F1)).